We begin with the raw amino-acid sequence, 194 residues long: RNA polymerase II subunit A C-terminal domain phosphatase SSU72 like protein 1 (194 aa).

Belongs to the SSU72 phosphatase family.

Its subcellular location is the nucleus. The enzyme catalyses O-phospho-L-seryl-[protein] + H2O = L-seryl-[protein] + phosphate. It catalyses the reaction O-phospho-L-threonyl-[protein] + H2O = L-threonyl-[protein] + phosphate. Protein phosphatase that catalyzes the dephosphorylation of the C-terminal domain of RNA polymerase II. Plays a role in RNA processing and termination. The chain is RNA polymerase II subunit A C-terminal domain phosphatase SSU72 like protein 1 from Homo sapiens (Human).